The following is a 145-amino-acid chain: SsrA-binding protein (145 aa).

Belongs to the SmpB family.

It localises to the cytoplasm. Its function is as follows. Required for rescue of stalled ribosomes mediated by trans-translation. Binds to transfer-messenger RNA (tmRNA), required for stable association of tmRNA with ribosomes. tmRNA and SmpB together mimic tRNA shape, replacing the anticodon stem-loop with SmpB. tmRNA is encoded by the ssrA gene; the 2 termini fold to resemble tRNA(Ala) and it encodes a 'tag peptide', a short internal open reading frame. During trans-translation Ala-aminoacylated tmRNA acts like a tRNA, entering the A-site of stalled ribosomes, displacing the stalled mRNA. The ribosome then switches to translate the ORF on the tmRNA; the nascent peptide is terminated with the 'tag peptide' encoded by the tmRNA and targeted for degradation. The ribosome is freed to recommence translation, which seems to be the essential function of trans-translation. This is SsrA-binding protein from Mycoplasmopsis pulmonis (strain UAB CTIP) (Mycoplasma pulmonis).